Here is a 945-residue protein sequence, read N- to C-terminus: Isoleucine--tRNA ligase (945 aa).

Residues P66–H76 carry the 'HIGH' region motif. E581 is an L-isoleucyl-5'-AMP binding site. The 'KMSKS' region motif lies at K622–S626. K625 contacts ATP. Positions 908, 911, 928, and 931 each coordinate Zn(2+).

This sequence belongs to the class-I aminoacyl-tRNA synthetase family. IleS type 1 subfamily. In terms of assembly, monomer. Zn(2+) serves as cofactor.

Its subcellular location is the cytoplasm. The enzyme catalyses tRNA(Ile) + L-isoleucine + ATP = L-isoleucyl-tRNA(Ile) + AMP + diphosphate. Catalyzes the attachment of isoleucine to tRNA(Ile). As IleRS can inadvertently accommodate and process structurally similar amino acids such as valine, to avoid such errors it has two additional distinct tRNA(Ile)-dependent editing activities. One activity is designated as 'pretransfer' editing and involves the hydrolysis of activated Val-AMP. The other activity is designated 'posttransfer' editing and involves deacylation of mischarged Val-tRNA(Ile). The protein is Isoleucine--tRNA ligase of Paraburkholderia phytofirmans (strain DSM 17436 / LMG 22146 / PsJN) (Burkholderia phytofirmans).